The sequence spans 261 residues: 5'-nucleotidase SurE (261 aa).

A divalent metal cation is bound by residues aspartate 8, aspartate 9, serine 43, and asparagine 96.

This sequence belongs to the SurE nucleotidase family. The cofactor is a divalent metal cation.

The protein localises to the cytoplasm. The catalysed reaction is a ribonucleoside 5'-phosphate + H2O = a ribonucleoside + phosphate. In terms of biological role, nucleotidase that shows phosphatase activity on nucleoside 5'-monophosphates. This is 5'-nucleotidase SurE from Cereibacter sphaeroides (strain ATCC 17023 / DSM 158 / JCM 6121 / CCUG 31486 / LMG 2827 / NBRC 12203 / NCIMB 8253 / ATH 2.4.1.) (Rhodobacter sphaeroides).